The following is a 500-amino-acid chain: Probable malate:quinone oxidoreductase (500 aa).

Belongs to the MQO family. FAD is required as a cofactor.

It carries out the reaction (S)-malate + a quinone = a quinol + oxaloacetate. The protein operates within carbohydrate metabolism; tricarboxylic acid cycle; oxaloacetate from (S)-malate (quinone route): step 1/1. In Bacillus cereus (strain B4264), this protein is Probable malate:quinone oxidoreductase.